The chain runs to 259 residues: Deoxyribose-phosphate aldolase (259 aa).

Residue Asp102 is the Proton donor/acceptor of the active site. Residue Lys167 is the Schiff-base intermediate with acetaldehyde of the active site. Lys201 serves as the catalytic Proton donor/acceptor.

The protein belongs to the DeoC/FbaB aldolase family. DeoC type 2 subfamily.

The protein resides in the cytoplasm. It catalyses the reaction 2-deoxy-D-ribose 5-phosphate = D-glyceraldehyde 3-phosphate + acetaldehyde. The protein operates within carbohydrate degradation; 2-deoxy-D-ribose 1-phosphate degradation; D-glyceraldehyde 3-phosphate and acetaldehyde from 2-deoxy-alpha-D-ribose 1-phosphate: step 2/2. Its function is as follows. Catalyzes a reversible aldol reaction between acetaldehyde and D-glyceraldehyde 3-phosphate to generate 2-deoxy-D-ribose 5-phosphate. The chain is Deoxyribose-phosphate aldolase from Escherichia coli (strain SMS-3-5 / SECEC).